The primary structure comprises 278 residues: Bifunctional protein FolD (278 aa).

NADP(+) is bound by residues 165–167 (GRS), S190, and T231.

The protein belongs to the tetrahydrofolate dehydrogenase/cyclohydrolase family. As to quaternary structure, homodimer.

The enzyme catalyses (6R)-5,10-methylene-5,6,7,8-tetrahydrofolate + NADP(+) = (6R)-5,10-methenyltetrahydrofolate + NADPH. It catalyses the reaction (6R)-5,10-methenyltetrahydrofolate + H2O = (6R)-10-formyltetrahydrofolate + H(+). Its pathway is one-carbon metabolism; tetrahydrofolate interconversion. Catalyzes the oxidation of 5,10-methylenetetrahydrofolate to 5,10-methenyltetrahydrofolate and then the hydrolysis of 5,10-methenyltetrahydrofolate to 10-formyltetrahydrofolate. In Clostridium novyi (strain NT), this protein is Bifunctional protein FolD.